A 452-amino-acid chain; its full sequence is Phosphoglucosamine mutase (452 aa).

The active-site Phosphoserine intermediate is serine 101. Serine 101, aspartate 241, aspartate 243, and aspartate 245 together coordinate Mg(2+). At serine 101 the chain carries Phosphoserine.

This sequence belongs to the phosphohexose mutase family. Mg(2+) serves as cofactor. In terms of processing, activated by phosphorylation.

It catalyses the reaction alpha-D-glucosamine 1-phosphate = D-glucosamine 6-phosphate. Its function is as follows. Catalyzes the conversion of glucosamine-6-phosphate to glucosamine-1-phosphate. The polypeptide is Phosphoglucosamine mutase (Lactococcus lactis subsp. cremoris (strain MG1363)).